Here is a 1524-residue protein sequence, read N- to C-terminus: DNA-directed RNA polymerase subunit beta' (1524 aa).

Zn(2+) is bound by residues C58, C60, C73, and C76. Mg(2+) is bound by residues D739, D741, and D743. C1112, C1194, C1201, and C1204 together coordinate Zn(2+). The segment at 1502 to 1524 (AVEAKEKEAPRRPVRREQPGKGL) is disordered.

It belongs to the RNA polymerase beta' chain family. As to quaternary structure, the RNAP catalytic core consists of 2 alpha, 1 beta, 1 beta' and 1 omega subunit. When a sigma factor is associated with the core the holoenzyme is formed, which can initiate transcription. It depends on Mg(2+) as a cofactor. The cofactor is Zn(2+).

It catalyses the reaction RNA(n) + a ribonucleoside 5'-triphosphate = RNA(n+1) + diphosphate. DNA-dependent RNA polymerase catalyzes the transcription of DNA into RNA using the four ribonucleoside triphosphates as substrates. The chain is DNA-directed RNA polymerase subunit beta' from Thermus aquaticus.